Reading from the N-terminus, the 189-residue chain is Elongation factor P (189 aa).

An N6-(3,6-diaminohexanoyl)-5-hydroxylysine modification is found at Lys-34.

It belongs to the elongation factor P family. In terms of processing, may be beta-lysylated on the epsilon-amino group of Lys-34 by the combined action of EpmA and EpmB, and then hydroxylated on the C5 position of the same residue by EpmC (if this protein is present). Lysylation is critical for the stimulatory effect of EF-P on peptide-bond formation. The lysylation moiety may extend toward the peptidyltransferase center and stabilize the terminal 3-CCA end of the tRNA. Hydroxylation of the C5 position on Lys-34 may allow additional potential stabilizing hydrogen-bond interactions with the P-tRNA.

The protein resides in the cytoplasm. It functions in the pathway protein biosynthesis; polypeptide chain elongation. Its function is as follows. Involved in peptide bond synthesis. Alleviates ribosome stalling that occurs when 3 or more consecutive Pro residues or the sequence PPG is present in a protein, possibly by augmenting the peptidyl transferase activity of the ribosome. Modification of Lys-34 is required for alleviation. This Francisella tularensis subsp. tularensis (strain FSC 198) protein is Elongation factor P.